The sequence spans 132 residues: Neurophysin 2 (132 aa).

7 disulfides stabilise this stretch: Cys-10–Cys-54, Cys-13–Cys-27, Cys-21–Cys-44, Cys-28–Cys-34, Cys-61–Cys-73, Cys-67–Cys-85, and Cys-74–Cys-79.

The protein belongs to the vasopressin/oxytocin family.

The protein localises to the secreted. Functionally, neurophysin 2 specifically binds vasopressin. This is Neurophysin 2 from Struthio camelus (Common ostrich).